Here is a 762-residue protein sequence, read N- to C-terminus: MASNERDAISWYQKKIGAYDQQIWEKSIEQTQIKGLKNKPKKMGHIKPDLIDVDLIRGSTFAKAKPEIPWTSLTRKGLVRVVFFPLFSNWWIQVTSLRIFVWLLLLYFMQVIAIVLYLMMPIVNISEVLGPLCLMLLMGTVHCQIVSTQITRPSGNNGNRRRRKLRKTVNGDGSRENGNNSSDKVRGIETLESVPIIGGFWETIFGNRIKRVKLISNKGTETDNDPSCVHPIIKRRQCRPEIRMWQTREKAKFSDGEKCRREAFRRLGNGVSDDLSSEEDGEARTQMILLRRSVEGASSDNGCEVKNRKSILSRHLNSQVKKTTTRWCHIVRDSDSLAESEFESAAFSQGSRSGVSGGSRSLNMSRRDSESTRHDSETEDMLWDDLLHGPECRSSVTSDSEGAHVNTLHSGTKRDPKEDVFQQNHLFWLQNSSPSSDRVSAIIWEGNECKKMDMSVLEISGIIMSRVNAYQQGVGYQMLGNVVTIGLAFFPFLHRLFREKSLDQLKSISAEEILTLFCGAPPVTPIIVLSIINFFERLCLTWMFFFMMCVAERTYKQRFLFAKLFSHITSARKARKYEIPHFRLKKVENIKIWLSLRSYLKRRGPQRSVDVVVSSVFLLTLSIAFICCAQVLQGHKTFLNDAYNWEFLIWETALLLFLLRLASLGSETNKKYSNVSILLTEQINLYLKMEKKPNKKEQLTLVNNVLKLSTKLLKELDTPFRLYGLTMNPLIYNITRVVILSAVSGVISDLLGFNIRLWKIKS.

Positions 6–150 constitute a PHTF domain; sequence RDAISWYQKK…VHCQIVSTQI (145 aa). 3 helical membrane passes run 77 to 97, 99 to 119, and 121 to 141; these read GLVRVVFFPLFSNWWIQVTSL, IFVWLLLLYFMQVIAIVLYLM, and PIVNISEVLGPLCLMLLMGTV. The tract at residues 152–184 is disordered; that stretch reads RPSGNNGNRRRRKLRKTVNGDGSRENGNNSSDK. N-linked (GlcNAc...) asparagine glycosylation is found at N179 and N180. Phosphoserine is present on residues S272, S276, S277, S334, and S336. Disordered stretches follow at residues 344–380 and 393–415; these read SAAFSQGSRSGVSGGSRSLNMSRRDSESTRHDSETED and RSSVTSDSEGAHVNTLHSGTKRD. Low complexity predominate over residues 348–361; that stretch reads SQGSRSGVSGGSRS. N363 is a glycosylation site (N-linked (GlcNAc...) asparagine). Residues 365–376 are compositionally biased toward basic and acidic residues; it reads SRRDSESTRHDS. N431 carries an N-linked (GlcNAc...) asparagine glycan. The next 4 membrane-spanning stretches (helical) occupy residues 473-493, 512-532, 611-631, and 645-665; these read GVGYQMLGNVVTIGLAFFPFL, EILTLFCGAPPVTPIIVLSII, VVVSSVFLLTLSIAFICCAQV, and WEFLIWETALLLFLLRLASLG. Residues N674 and N733 are each glycosylated (N-linked (GlcNAc...) asparagine). The chain crosses the membrane as a helical span at residues 737 to 757; it reads VVILSAVSGVISDLLGFNIRL.

As to quaternary structure, interacts with FEM1B. As to expression, widely expressed with highest levels in testis.

It localises to the endoplasmic reticulum membrane. The protein localises to the golgi apparatus. The protein resides in the cis-Golgi network membrane. In Homo sapiens (Human), this protein is Protein PHTF1.